A 374-amino-acid chain; its full sequence is DNA replication and repair protein RecF (374 aa).

Residue 34–41 (GDNGAGKT) coordinates ATP.

This sequence belongs to the RecF family.

The protein resides in the cytoplasm. Functionally, the RecF protein is involved in DNA metabolism; it is required for DNA replication and normal SOS inducibility. RecF binds preferentially to single-stranded, linear DNA. It also seems to bind ATP. In Rhizobium leguminosarum bv. trifolii (strain WSM2304), this protein is DNA replication and repair protein RecF.